The sequence spans 256 residues: Cell division protein ZapD (256 aa).

This sequence belongs to the ZapD family. Interacts with FtsZ.

Its subcellular location is the cytoplasm. Its function is as follows. Cell division factor that enhances FtsZ-ring assembly. Directly interacts with FtsZ and promotes bundling of FtsZ protofilaments, with a reduction in FtsZ GTPase activity. In Aromatoleum aromaticum (strain DSM 19018 / LMG 30748 / EbN1) (Azoarcus sp. (strain EbN1)), this protein is Cell division protein ZapD.